The chain runs to 125 residues: MINSPRVCIQVQSVYIEAQSSPDDERYVFAYTVTIRNLGRAPVQLLGRYWLITNGHGRETEVQGEGVVGVQPRIAPGEEYQYTSGAVIETPLGTMQGHYEMIDENGDAFTIDIPVFRLAVPTLIH.

Positions 1-125 (MINSPRVCIQ…FRLAVPTLIH (125 aa)) constitute an ApaG domain.

This Salmonella arizonae (strain ATCC BAA-731 / CDC346-86 / RSK2980) protein is Protein ApaG.